The sequence spans 358 residues: Peptide chain release factor 1 (358 aa).

Gln233 carries the post-translational modification N5-methylglutamine.

Belongs to the prokaryotic/mitochondrial release factor family. Methylated by PrmC. Methylation increases the termination efficiency of RF1.

The protein localises to the cytoplasm. Its function is as follows. Peptide chain release factor 1 directs the termination of translation in response to the peptide chain termination codons UAG and UAA. The polypeptide is Peptide chain release factor 1 (Geobacillus kaustophilus (strain HTA426)).